A 160-amino-acid polypeptide reads, in one-letter code: Phosphopantetheine adenylyltransferase (160 aa).

Serine 8 contacts substrate. ATP is bound by residues 8–9 (SF) and histidine 16. Positions 40, 73, and 87 each coordinate substrate. ATP contacts are provided by residues 88–90 (GLR), glutamate 98, and 122–128 (YGYVSST).

It belongs to the bacterial CoaD family. As to quaternary structure, homohexamer. It depends on Mg(2+) as a cofactor.

The protein localises to the cytoplasm. It catalyses the reaction (R)-4'-phosphopantetheine + ATP + H(+) = 3'-dephospho-CoA + diphosphate. It functions in the pathway cofactor biosynthesis; coenzyme A biosynthesis; CoA from (R)-pantothenate: step 4/5. Reversibly transfers an adenylyl group from ATP to 4'-phosphopantetheine, yielding dephospho-CoA (dPCoA) and pyrophosphate. The sequence is that of Phosphopantetheine adenylyltransferase from Corynebacterium glutamicum (strain R).